The sequence spans 1023 residues: Phosphoenolpyruvate carboxylase (1023 aa).

Active-site residues include histidine 199 and lysine 669.

This sequence belongs to the PEPCase type 1 family. The cofactor is Mg(2+).

It catalyses the reaction oxaloacetate + phosphate = phosphoenolpyruvate + hydrogencarbonate. Forms oxaloacetate, a four-carbon dicarboxylic acid source for the tricarboxylic acid cycle. This chain is Phosphoenolpyruvate carboxylase, found in Trichormus variabilis (strain ATCC 29413 / PCC 7937) (Anabaena variabilis).